A 488-amino-acid chain; its full sequence is Thiamine transporter 2 (488 aa).

Topologically, residues 1–8 (MDSSCRTP) are cytoplasmic. The chain crosses the membrane as a helical span at residues 9 to 29 (PSNSWVYPTVILCLFGFFSMF). Over 30–54 (RPSEAFLIPFLSEPSKNLTSPEMTN) the chain is Extracellular. Asn-46 carries N-linked (GlcNAc...) asparagine glycosylation. Residues 55–75 (EILPVWTYSYLATLPPVFVLT) form a helical membrane-spanning segment. Over 76-82 (DYLRYKP) the chain is Cytoplasmic. Residues 83 to 103 (VIMLHVVAFATSYLFLLFGQG) traverse the membrane as a helical segment. The Extracellular segment spans residues 104–111 (VMLMQTAE). A helical transmembrane segment spans residues 112 to 132 (FFFGVVSATEIAYFAYIYSMV). Over 133–145 (SPEHYQKVSSYCR) the chain is Cytoplasmic. The chain crosses the membrane as a helical span at residues 146–166 (SITLVAYTAGSVLAQLLVSLT). Over 167-172 (NLPYSS) the chain is Extracellular. Residues 173–193 (LFYISLACVSVAFFFSLFLPM) traverse the membrane as a helical segment. Topologically, residues 194 to 276 (PKKSMFFHAK…YSSKHLVYWS (83 aa)) are cytoplasmic. The chain crosses the membrane as a helical span at residues 277–297 (LWWAFATAGYNQILNYVQVLW). Topologically, residues 298–310 (EHKAPSQDSSIYN) are extracellular. The chain crosses the membrane as a helical span at residues 311–331 (GAVEAIATFGGALASFSVGYL). The Cytoplasmic segment spans residues 332 to 335 (KVNW). The chain crosses the membrane as a helical span at residues 336-356 (DLLGELGLAVFSAVIAGSLFL). Topologically, residues 357–369 (MNYSRSIWVCYAG) are extracellular. N-linked (GlcNAc...) asparagine glycosylation is present at Asn-358. The helical transmembrane segment at 370-390 (YLLVKSSYSFLITIAVFQIAV) threads the bilayer. The Cytoplasmic portion of the chain corresponds to 391–399 (NLSLERYAL). Residues 400-420 (VFGIDTFIALVIQTIMTMIVV) form a helical membrane-spanning segment. At 421–428 (DQRGLQLP) the chain is on the extracellular side. A helical transmembrane segment spans residues 429–449 (VTTQFLVYGSYFAVIAGVFLM). At 450-488 (RSIYILCSAKCRKEVQNLATTRSPNEPHPQEPSNVSTKF) the chain is on the cytoplasmic side. The segment at 469–488 (TTRSPNEPHPQEPSNVSTKF) is disordered.

Belongs to the reduced folate carrier (RFC) transporter (TC 2.A.48) family. In terms of tissue distribution, high expression in kidney, brain, lung and small intestine. Detected in pancreatic acinar cells (at protein level). Also expressed strongly in pancreatic islet cells.

Its subcellular location is the membrane. It catalyses the reaction thiamine(out) + H(+)(in) = thiamine(in) + H(+)(out). In terms of biological role, high-affinity transporter for the intake of thiamine. Unlike the human ortholog, lacks H(+)-dependent pyridoxine transport activity due to an absence of seven critical amino-acids required for pyridoxine transport. This is Thiamine transporter 2 (Slc19a3) from Mus musculus (Mouse).